The chain runs to 770 residues: Glutamate carboxypeptidase 2 homolog (770 aa).

Residues 1–25 (MPYVGVGAQTVSTSLTGAPMVKAYI) are Cytoplasmic-facing. The chain crosses the membrane as a helical; Signal-anchor for type II membrane protein span at residues 26–42 (AIAASLIFVFCIAALGV). Topologically, residues 43–770 (HHSERKFNKF…CVVNTLRDVI (728 aa)) are extracellular. N-linked (GlcNAc...) asparagine glycans are attached at residues Asn-175 and Asn-337. The tract at residues 282-597 (SKKELFKGRT…QYWAELAKTF (316 aa)) is catalytic. Zn(2+) is bound by residues His-387 and Asp-397. Asn-417 carries N-linked (GlcNAc...) asparagine glycosylation. Glu-435 (nucleophile) is an active-site residue. Zn(2+)-binding residues include Glu-436 and Asp-464. 3 N-linked (GlcNAc...) asparagine glycosylation sites follow: Asn-469, Asn-546, and Asn-551. Residue His-562 participates in Zn(2+) binding. N-linked (GlcNAc...) asparagine glycosylation is found at Asn-579, Asn-606, and Asn-630.

Belongs to the peptidase M28 family. M28B subfamily. Zn(2+) is required as a cofactor.

It is found in the membrane. The catalysed reaction is Release of an unsubstituted, C-terminal glutamyl residue, typically from Ac-Asp-Glu or folylpoly-gamma-glutamates.. This Caenorhabditis elegans protein is Glutamate carboxypeptidase 2 homolog.